The primary structure comprises 285 residues: RNA 5'-monophosphate methyltransferase (285 aa).

Residues Arg46, Asn77, Asp111, 136-137 (DI), and Met165 each bind S-adenosyl-L-methionine. The 223-residue stretch at 53–275 (ELLRQLFPPE…KHTHETQAIP (223 aa)) folds into the Bin3-type SAM domain.

Belongs to the methyltransferase superfamily. As to quaternary structure, interacts with DICER1; the interaction may be mediated by RNA.

The protein resides in the cytoplasm. It catalyses the reaction a 5'-end 5'-phospho-ribonucleoside-RNA + S-adenosyl-L-methionine = a 5'-end (5'-methylphospho)-ribonucleoside-RNA + S-adenosyl-L-homocysteine. The catalysed reaction is a 5'-end 5'-phospho-ribonucleoside-RNA + 2 S-adenosyl-L-methionine = a 5'-end (5'-bismethylphospho)-ribonucleoside-RNA + 2 S-adenosyl-L-homocysteine. O-methyltransferase that specifically monomethylates 5'-monophosphate of cytoplasmic histidyl tRNA (tRNA(His)), acting as a capping enzyme by protecting tRNA(His) from cleavage by DICER1. Also able, with less efficiently, to methylate the 5' monophosphate of a subset of pre-miRNAs, acting as a negative regulator of miRNA processing. The 5' monophosphate of pre-miRNAs is recognized by DICER1 and is required for pre-miRNAs processing: methylation at this position reduces the processing of pre-miRNAs by DICER1. Was also reported to mediate dimethylation of pre-miR-145; however dimethylation cannot be reproduced by another group which observes a monomethylation of pre-miR-145. This Mus musculus (Mouse) protein is RNA 5'-monophosphate methyltransferase.